Consider the following 334-residue polypeptide: Heme A synthase (334 aa).

5 consecutive transmembrane segments (helical) span residues 6-26, 93-113, 119-139, 154-174, and 189-209; these read ITRW…IGGI, GRIT…QGVI, LPYI…WYMV, LAFH…QLIK, and LIFS…GALV. His-253 contributes to the heme binding site. A run of 3 helical transmembrane segments spans residues 255–275, 282–302, and 305–325; these read LGGF…FKVK, IAYF…ITIV, and VPII…SIII. His-313 provides a ligand contact to heme.

Belongs to the COX15/CtaA family. Type 2 subfamily. As to quaternary structure, interacts with CtaB. Heme b is required as a cofactor.

Its subcellular location is the cell membrane. The enzyme catalyses Fe(II)-heme o + 2 A + H2O = Fe(II)-heme a + 2 AH2. Its pathway is porphyrin-containing compound metabolism; heme A biosynthesis; heme A from heme O: step 1/1. Functionally, catalyzes the conversion of heme O to heme A by two successive hydroxylations of the methyl group at C8. The first hydroxylation forms heme I, the second hydroxylation results in an unstable dihydroxymethyl group, which spontaneously dehydrates, resulting in the formyl group of heme A. This is Heme A synthase from Rickettsia prowazekii (strain Madrid E).